A 130-amino-acid polypeptide reads, in one-letter code: Cyclin-dependent kinase 4 inhibitor B (130 aa).

ANK repeat units follow at residues 5–34 (GSDA…DPNA), 38–66 (FGRR…EPNC), 71–100 (TLTR…RLDV), and 104–130 (WGRL…ATGD). At Thr-12 the chain carries Phosphothreonine.

This sequence belongs to the CDKN2 cyclin-dependent kinase inhibitor family. Heterodimer of CDKN2B with CDK4 or CDK6. As to expression, expression abundant in lung, less abundant in testis, barely detectable in liver, and not detectable in neonatal kidney, adult kidney, brain, heart, or spleen.

Interacts strongly with CDK4 and CDK6. Potent inhibitor. Potential effector of TGF-beta induced cell cycle arrest. In Rattus norvegicus (Rat), this protein is Cyclin-dependent kinase 4 inhibitor B (Cdkn2b).